The primary structure comprises 805 residues: Leucine--tRNA ligase (805 aa).

A 'HIGH' region motif is present at residues 39 to 50; the sequence is PYPSGKGLHVGH. A 'KMSKS' region motif is present at residues 583–587; it reads KMSKS. Residue K586 participates in ATP binding.

The protein belongs to the class-I aminoacyl-tRNA synthetase family.

It is found in the cytoplasm. It carries out the reaction tRNA(Leu) + L-leucine + ATP = L-leucyl-tRNA(Leu) + AMP + diphosphate. The polypeptide is Leucine--tRNA ligase (Mycoplasmoides gallisepticum (strain R(low / passage 15 / clone 2)) (Mycoplasma gallisepticum)).